A 191-amino-acid chain; its full sequence is Adenylate kinase (191 aa).

Residue 12–17 participates in ATP binding; the sequence is GSGKTT. The NMP stretch occupies residues 34 to 63; it reads STGDLLRAESAKKTERGLLIEKFTSQGELV. AMP is bound by residues Thr35, Arg40, 61 to 63, 88 to 91, and Gln95; these read ELV and GYPR. The tract at residues 130 to 136 is LID; it reads GRSRGAD. Arg131 provides a ligand contact to ATP. AMP contacts are provided by Arg133 and Arg145. Arg173 contacts ATP.

It belongs to the adenylate kinase family. As to quaternary structure, monomer.

Its subcellular location is the cytoplasm. The enzyme catalyses AMP + ATP = 2 ADP. It participates in purine metabolism; AMP biosynthesis via salvage pathway; AMP from ADP: step 1/1. Catalyzes the reversible transfer of the terminal phosphate group between ATP and AMP. Plays an important role in cellular energy homeostasis and in adenine nucleotide metabolism. This Helicobacter pylori (strain HPAG1) protein is Adenylate kinase.